The sequence spans 276 residues: Rhomboid protease GlpG (276 aa).

The next 6 helical transmembrane spans lie at 94–114 (GPVTWIVMIACVLVYIAMSLI), 142–162 (IFMHFSLMHILFNLLWWWYLG), 169–189 (LGSGKLIVITVVSALLSGYVQ), 192–212 (FSGPWFGGLSGVVYALMGYVW), 229–249 (LIIFALLWIVAGWFDWFGMSM), and 250–270 (ANGAHIAGLIVGLAMAFVDTL). The active-site Nucleophile is S201. H254 is an active-site residue.

The protein belongs to the peptidase S54 family.

Its subcellular location is the cell inner membrane. The enzyme catalyses Cleaves type-1 transmembrane domains using a catalytic dyad composed of serine and histidine that are contributed by different transmembrane domains.. Functionally, rhomboid-type serine protease that catalyzes intramembrane proteolysis. The chain is Rhomboid protease GlpG from Salmonella choleraesuis (strain SC-B67).